The following is a 296-amino-acid chain: Solute carrier protein FPSE_08119 (296 aa).

The next 3 membrane-spanning stretches (helical) occupy residues 12–32, 122–142, and 219–239; these read GLAALQTALPFIVGCGSGMVA, AGVGAGALAAVVGNPTEVILI, and AVAAGIAGCLGALISQPFDFV. Solcar repeat units follow at residues 16 to 102, 114 to 205, and 213 to 296; these read LQTA…FEKE, LSFG…AKNQ, and SPPV…GPHS.

The protein belongs to the mitochondrial carrier (TC 2.A.29) family.

Its subcellular location is the mitochondrion inner membrane. Its function is as follows. Solute carrier protein; part of the Fusarium detoxification of benzoxazolinone cluster involved in the degradation of benzoxazolinones produced by the host plant. Maize, wheat, and rye produce the 2 benzoxazinone phytoanticipins 2,4-dihy-droxy-7-methoxy-1,4-benzoxazin-3-one (DIMBOA) and 2,4-dihydroxy-1,4-benzoxazin-3-one (DIBOA) that, due to their inherent instability once released, spontaneously degrade to the more stable corresponding benzoxazolinones, 6-methoxy-2-benzoxazolinone (MBOA) and 2-benzoxazolinone (BOA), respectively. This is Solute carrier protein FPSE_08119 from Fusarium pseudograminearum (strain CS3096) (Wheat and barley crown-rot fungus).